The sequence spans 904 residues: DNA mismatch repair protein MutS (904 aa).

654–661 (GPNMAGKS) lines the ATP pocket.

The protein belongs to the DNA mismatch repair MutS family.

In terms of biological role, this protein is involved in the repair of mismatches in DNA. It is possible that it carries out the mismatch recognition step. This protein has a weak ATPase activity. The polypeptide is DNA mismatch repair protein MutS (Caulobacter sp. (strain K31)).